The primary structure comprises 215 residues: UPF0056 membrane protein BU267 (215 aa).

Helical transmembrane passes span phenylalanine 14–methionine 34, leucine 56–isoleucine 76, isoleucine 81–lysine 101, valine 120–tryptophan 140, leucine 150–alanine 170, and isoleucine 189–isoleucine 209.

This sequence belongs to the UPF0056 (MarC) family.

It is found in the cell membrane. The sequence is that of UPF0056 membrane protein BU267 from Buchnera aphidicola subsp. Acyrthosiphon pisum (strain APS) (Acyrthosiphon pisum symbiotic bacterium).